Consider the following 546-residue polypeptide: Chaperonin GroEL (546 aa).

Residues 30-33 (TLGP), K51, 87-91 (DGTTT), G415, and D495 each bind ATP.

This sequence belongs to the chaperonin (HSP60) family. In terms of assembly, forms a cylinder of 14 subunits composed of two heptameric rings stacked back-to-back. Interacts with the co-chaperonin GroES.

Its subcellular location is the cytoplasm. The enzyme catalyses ATP + H2O + a folded polypeptide = ADP + phosphate + an unfolded polypeptide.. Together with its co-chaperonin GroES, plays an essential role in assisting protein folding. The GroEL-GroES system forms a nano-cage that allows encapsulation of the non-native substrate proteins and provides a physical environment optimized to promote and accelerate protein folding. The polypeptide is Chaperonin GroEL (Alteromonas mediterranea (strain DSM 17117 / CIP 110805 / LMG 28347 / Deep ecotype)).